The primary structure comprises 311 residues: Replication initiation protein (311 aa).

The protein belongs to the plasmid replication initiation factor family.

Its function is as follows. This protein is probably a specific topoisomerase involved in initiating replication. This protein is specifically required and may be rate-limiting for replication of the plasmid in vivo. This Staphylococcus aureus protein is Replication initiation protein (repD).